The chain runs to 365 residues: DNA replication and repair protein RecF (365 aa).

Residue 30–37 (GDNGEGKT) participates in ATP binding.

It belongs to the RecF family.

Its subcellular location is the cytoplasm. In terms of biological role, the RecF protein is involved in DNA metabolism; it is required for DNA replication and normal SOS inducibility. RecF binds preferentially to single-stranded, linear DNA. It also seems to bind ATP. In Leptospira interrogans serogroup Icterohaemorrhagiae serovar copenhageni (strain Fiocruz L1-130), this protein is DNA replication and repair protein RecF.